The following is a 678-amino-acid chain: Exoribonuclease 2 (678 aa).

Residues 193-521 enclose the RNB domain; it reads REDLTALPFV…INHRLLKAHI (329 aa). Residues 568–650 enclose the S1 motif domain; sequence ETRFQAEIFD…ENRSLVGKPT (83 aa). A disordered region spans residues 659–678; sequence ETQTSAEQPAEGAENNEPQV.

This sequence belongs to the RNR ribonuclease family. RNase II subfamily.

The protein localises to the cytoplasm. The catalysed reaction is Exonucleolytic cleavage in the 3'- to 5'-direction to yield nucleoside 5'-phosphates.. Involved in mRNA degradation. Hydrolyzes single-stranded polyribonucleotides processively in the 3' to 5' direction. The sequence is that of Exoribonuclease 2 from Vibrio cholerae serotype O1 (strain ATCC 39315 / El Tor Inaba N16961).